The sequence spans 239 residues: 7-cyano-7-deazaguanine synthase (239 aa).

ATP is bound at residue 16–26; sequence FSGGQDSTTCL. Cys204, Cys219, Cys222, and Cys225 together coordinate Zn(2+).

This sequence belongs to the QueC family. Zn(2+) is required as a cofactor.

It carries out the reaction 7-carboxy-7-deazaguanine + NH4(+) + ATP = 7-cyano-7-deazaguanine + ADP + phosphate + H2O + H(+). It participates in purine metabolism; 7-cyano-7-deazaguanine biosynthesis. Catalyzes the ATP-dependent conversion of 7-carboxy-7-deazaguanine (CDG) to 7-cyano-7-deazaguanine (preQ(0)). The chain is 7-cyano-7-deazaguanine synthase from Polaromonas naphthalenivorans (strain CJ2).